An 876-amino-acid polypeptide reads, in one-letter code: Leucine--tRNA ligase (876 aa).

A 'HIGH' region motif is present at residues 43-53; it reads PYPSGRIHIGH. Residues 632–636 carry the 'KMSKS' region motif; that stretch reads KMSKS. K635 serves as a coordination point for ATP.

The protein belongs to the class-I aminoacyl-tRNA synthetase family.

The protein resides in the cytoplasm. The catalysed reaction is tRNA(Leu) + L-leucine + ATP = L-leucyl-tRNA(Leu) + AMP + diphosphate. The polypeptide is Leucine--tRNA ligase (Allorhizobium ampelinum (strain ATCC BAA-846 / DSM 112012 / S4) (Agrobacterium vitis (strain S4))).